The sequence spans 323 residues: C-type lectin domain family 11 member A (323 aa).

Residues 1 to 21 (MQAAWLLGALVVPQLLGFGHG) form the signal peptide. Disordered stretches follow at residues 55-106 (LGLP…TPED) and 272-295 (LGAQPSASPHPLSPDQPNGGTLEN). The short motif at 61 to 63 (RGD) is the Cell attachment site element. The segment covering 74–90 (EDWEMEEDQGEEEEEEA) has biased composition (acidic residues). Residues 183 to 320 (LGHKCFLLSR…CQRRLYYVCE (138 aa)) enclose the C-type lectin domain. Cystine bridges form between cysteine 204-cysteine 319 and cysteine 296-cysteine 311.

Post-translationally, O-glycosylated. Probably sulfated on the O-glycans. Expressed in skeletal tissues including bone marrow, chondrocytes, primary ossification center-associated cells, the perichondrium and periosteum. Lower levels of expression were detected in spleen, thymus, appendix and fetal liver.

The protein localises to the cytoplasm. The protein resides in the secreted. Its function is as follows. Promotes osteogenesis by stimulating the differentiation of mesenchymal progenitors into mature osteoblasts. Important for repair and maintenance of adult bone. The polypeptide is C-type lectin domain family 11 member A (CLEC11A) (Homo sapiens (Human)).